The sequence spans 529 residues: Bifunctional purine biosynthesis protein PurH (529 aa).

Positions 1-148 constitute an MGS-like domain; sequence MQQRRPVRRA…KNHKDVAIVV (148 aa). N6-acetyllysine is present on lysine 287.

It belongs to the PurH family.

The enzyme catalyses (6R)-10-formyltetrahydrofolate + 5-amino-1-(5-phospho-beta-D-ribosyl)imidazole-4-carboxamide = 5-formamido-1-(5-phospho-D-ribosyl)imidazole-4-carboxamide + (6S)-5,6,7,8-tetrahydrofolate. It catalyses the reaction IMP + H2O = 5-formamido-1-(5-phospho-D-ribosyl)imidazole-4-carboxamide. It functions in the pathway purine metabolism; IMP biosynthesis via de novo pathway; 5-formamido-1-(5-phospho-D-ribosyl)imidazole-4-carboxamide from 5-amino-1-(5-phospho-D-ribosyl)imidazole-4-carboxamide (10-formyl THF route): step 1/1. The protein operates within purine metabolism; IMP biosynthesis via de novo pathway; IMP from 5-formamido-1-(5-phospho-D-ribosyl)imidazole-4-carboxamide: step 1/1. The sequence is that of Bifunctional purine biosynthesis protein PurH from Escherichia coli (strain SMS-3-5 / SECEC).